Reading from the N-terminus, the 486-residue chain is Receptor-interacting serine/threonine-protein kinase 3 (486 aa).

S2 carries the phosphoserine modification. Residues 22 to 292 (LKKLEFVGKG…DCEPKTNEVY (271 aa)) form the Protein kinase domain. ATP contacts are provided by residues 28–36 (VGKGGFGVV) and K51. The Proton acceptor role is filled by D143. S165 is subject to Phosphoserine. Phosphothreonine is present on T187. The residue at position 204 (S204) is a Phosphoserine; by autocatalysis. T231 is subject to Phosphothreonine; by autocatalysis. S232 is modified (phosphoserine; by autocatalysis). Residue T257 is modified to Phosphothreonine. S304 and S326 each carry phosphoserine. The interval 312 to 333 (QHRSSGRNLSAREPSQRGTEMD) is disordered. T338 bears the Phosphothreonine mark. The disordered stretch occupies residues 349–388 (LEEPSGPVPGKCPERQAQDTSVGPATPARTSSDPVAGTPQ). Residues S353, S369, and S380 each carry the phosphoserine modification. A compositionally biased stretch (polar residues) spans 366 to 381 (QDTSVGPATPARTSSD). T392 is modified (phosphothreonine). The RIP homotypic interaction motif (RHIM) motif lies at 440–461 (LVFNNCSEVQIGNYNSLVAPPR). A disordered region spans residues 462–486 (TTASSSAKYDQAQFGRGRGWQPFHK). R477 carries the omega-N-methylarginine modification.

The protein belongs to the protein kinase superfamily. TKL Ser/Thr protein kinase family. In terms of assembly, interacts (via RIP homotypic interaction motif) with RIPK1 (via RIP homotypic interaction motif); this interaction induces RIPK1 phosphorylation and formation of a RIPK1-RIPK3 necrosis-inducing complex. Interacts with MLKL; the interaction is direct and triggers necroptosis. Interacts with ZBP1 (via RIP homotypic interaction motif); interaction with ZBP1 activates RIPK3, triggering necroptosis. Upon TNF-induced necrosis, the RIPK1-RIPK3 dimer further interacts with PGAM5 and MLKL; the formation of this complex leads to PGAM5 phosphorylation and increase in PGAM5 phosphatase activity. Binds TRAF2 and is recruited to the TNFR-1 signaling complex. Interacts with PYGL, GLUL and GLUD1; these interactions result in activation of these metabolic enzymes. Interacts with BIRC2/c-IAP1, BIRC3/c-IAP2 and XIAP/BIRC4. Interacts with ARHGEF2. Interacts with PELI1 (via atypical FHA domain); the phosphorylated form at Thr-187 binds preferentially to PELI1. Interacts with BUB1B, TRAF2 and STUB1. Interacts with CASP6. Component of the AIM2 PANoptosome complex, a multiprotein complex that drives inflammatory cell death (PANoptosis). As to quaternary structure, (Microbial infection) Interacts (via RIP homotypic interaction motif) with murid herpesvirus protein RIR1; this interaction disrupts RIP3-RIP1 interactions characteristic of TNF-alpha induced necroptosis, thereby suppressing this death pathway. Post-translationally, RIPK1 and RIPK3 undergo reciprocal auto- and trans-phosphorylation. Autophosphorylated following interaction with ZBP1. Phosphorylation of Ser-204 plays a role in the necroptotic function of RIPK3. Autophosphorylates at Thr-231 and Ser-232 following activation by ZBP1: phosphorylation at these sites is a hallmark of necroptosis and is required for binding MLKL. Phosphorylation at Thr-187 is important for its kinase activity, interaction with PELI1 and for its ability to mediate TNF-induced necroptosis. Polyubiquitinated with 'Lys-48' and 'Lys-63'-linked chains by BIRC2/c-IAP1 and BIRC3/c-IAP2, leading to activation of NF-kappa-B. Ubiquitinated by STUB1 leading to its subsequent proteasome-dependent degradation. In terms of tissue distribution, expressed in embryo and in adult spleen, liver, testis, heart, brain and lung.

The protein localises to the cytoplasm. It localises to the cytosol. It is found in the nucleus. It carries out the reaction L-seryl-[protein] + ATP = O-phospho-L-seryl-[protein] + ADP + H(+). The enzyme catalyses L-threonyl-[protein] + ATP = O-phospho-L-threonyl-[protein] + ADP + H(+). Activity is stimulated by ZBP1, which senses double-stranded Z-RNA structures. RIPK3-dependent necroptosis is inhibited by RIPK1: RIPK1 prevents the ZBP1-induced activation of RIPK3 via FADD-mediated recruitment of CASP8, which cleaves RIPK1 and limits TNF-induced necroptosis. Inhibited by type II inhibitor 1-(4-fluorophenyl)-N-[3-fluoro-4-(1H-pyrrolo[2,3-b]pyridin-4-yloxy)phenyl]-2-oxo-1,2-dihydropyridine-3-carboxamide. Its function is as follows. Serine/threonine-protein kinase that activates necroptosis and apoptosis, two parallel forms of cell death. Necroptosis, a programmed cell death process in response to death-inducing TNF-alpha family members, is triggered by RIPK3 following activation by ZBP1. Activated RIPK3 forms a necrosis-inducing complex and mediates phosphorylation of MLKL, promoting MLKL localization to the plasma membrane and execution of programmed necrosis characterized by calcium influx and plasma membrane damage. In addition to TNF-induced necroptosis, necroptosis can also take place in the nucleus in response to orthomyxoviruses infection: following ZBP1 activation, which senses double-stranded Z-RNA structures, nuclear RIPK3 catalyzes phosphorylation and activation of MLKL, promoting disruption of the nuclear envelope and leakage of cellular DNA into the cytosol. Also regulates apoptosis: apoptosis depends on RIPK1, FADD and CASP8, and is independent of MLKL and RIPK3 kinase activity. Phosphorylates RIPK1: RIPK1 and RIPK3 undergo reciprocal auto- and trans-phosphorylation. In some cell types, also able to restrict viral replication by promoting cell death-independent responses. In response to flavivirus infection in neurons, promotes a cell death-independent pathway that restricts viral replication: together with ZBP1, promotes a death-independent transcriptional program that modifies the cellular metabolism via up-regulation expression of the enzyme ACOD1/IRG1 and production of the metabolite itaconate. Itaconate inhibits the activity of succinate dehydrogenase, generating a metabolic state in neurons that suppresses replication of viral genomes. RIPK3 binds to and enhances the activity of three metabolic enzymes: GLUL, GLUD1, and PYGL. These metabolic enzymes may eventually stimulate the tricarboxylic acid cycle and oxidative phosphorylation, which could result in enhanced ROS production. In Mus musculus (Mouse), this protein is Receptor-interacting serine/threonine-protein kinase 3.